The following is a 735-amino-acid chain: Capsid protein (735 aa).

Disordered stretches follow at residues 577 to 604 (VVRNPCKGTGGASASRKPRSVQVTDPKY) and 632 to 695 (QQAS…TVEQ). Residues 649 to 666 (EIKGLTEADQEAEKDSGL) are compositionally biased toward basic and acidic residues. A compositionally biased stretch (low complexity) spans 676-685 (SSQETQSEQE).

This sequence belongs to the anelloviridae capsid protein family.

It is found in the virion. In terms of biological role, self assemble to form an icosahedral capsid. This Pan troglodytes (Chimpanzee) protein is Capsid protein.